The sequence spans 243 residues: Ribonuclease PH (243 aa).

Phosphate contacts are provided by residues arginine 91 and 129–131 (GTR).

Belongs to the RNase PH family. Homohexameric ring arranged as a trimer of dimers.

The enzyme catalyses tRNA(n+1) + phosphate = tRNA(n) + a ribonucleoside 5'-diphosphate. Its function is as follows. Phosphorolytic 3'-5' exoribonuclease that plays an important role in tRNA 3'-end maturation. Removes nucleotide residues following the 3'-CCA terminus of tRNAs; can also add nucleotides to the ends of RNA molecules by using nucleoside diphosphates as substrates, but this may not be physiologically important. Probably plays a role in initiation of 16S rRNA degradation (leading to ribosome degradation) during starvation. This chain is Ribonuclease PH, found in Burkholderia thailandensis (strain ATCC 700388 / DSM 13276 / CCUG 48851 / CIP 106301 / E264).